Reading from the N-terminus, the 892-residue chain is von Willebrand factor A domain-containing protein 7 (892 aa).

Positions 1–27 (MLPVEVPLSQLGPPVLLLQLLLPPTSA) are cleaved as a signal peptide. Asparagine 54 is a glycosylation site (N-linked (GlcNAc...) asparagine). The segment at 231–272 (YFGTNPPKPPGKCSHGGRFDQSSSQPPRGGINKDSTSPSFSP) is disordered. Positions 313 to 495 (ASSLSFVLDT…HIRDVAAVVG (183 aa)) constitute a VWFA domain.

Its subcellular location is the secreted. The protein is von Willebrand factor A domain-containing protein 7 (Vwa7) of Rattus norvegicus (Rat).